Here is a 1302-residue protein sequence, read N- to C-terminus: Serine-enriched protein (1302 aa).

The BTB domain occupies 40-158; that stretch reads CDVTFLVGDT…IHTGCVTLQP (119 aa). 8 disordered regions span residues 325–532, 575–624, 648–685, 701–752, 834–858, 1045–1090, 1102–1163, and 1187–1252; these read SIDP…RSPT, PIPP…SVMR, FTRA…QKQM, YAKM…SSDE, FTRR…DSND, FQRS…RTEN, FSRA…GEEE, and VLTQ…SASP. Positions 337 to 364 are enriched in basic residues; it reads RQHHRHRHHHQSLPKIRKAKSQSFRTRR. Composition is skewed to polar residues over residues 378–388, 410–430, 437–449, and 472–487; these read LTLNTSLTSGN, SPGS…TLRA, SGQL…TQGR, and GLRS…TVRS. The segment covering 589-623 has biased composition (basic and acidic residues); it reads KSAEREREAAEAAAREKEKEKEKEAAQPQEKKSVM. A compositionally biased stretch (low complexity) spans 664–680; it reads STFSASPAASSTAAKSA. Basic and acidic residues predominate over residues 713–723; sequence KRDDEEKEKQK. Over residues 736–748 the composition is skewed to polar residues; the sequence is DLSQTNADQQVGG. The span at 836–855 shows a compositional bias: basic and acidic residues; the sequence is RRSESREPIEPRISEERESD. Low complexity-rich tracts occupy residues 1047–1056 and 1107–1128; these read RSGSSCGGRK and SPLS…SSGS. Over residues 1187-1207 the composition is skewed to polar residues; that stretch reads VLTQQLSTGSMSTPSGYTNGT. Positions 1226–1252 are enriched in low complexity; the sequence is APLSSCGFSSGSEFEPPSPRRAASASP.

This Drosophila melanogaster (Fruit fly) protein is Serine-enriched protein (gprs).